A 318-amino-acid chain; its full sequence is MTASRDGAGLTNGATRADQAGPVIAVVGPTGAGKSDLAVEIALELGGEIVNADSMQLYRGMDIGTAKIPMVERRGVPHHLLDVWEITRAADVASYQADARRVVNGLLAAGRVPILVGGSGLYVRAVLDDLSFPGTDPAVRARLERELAEVGPGPLHERLTGLAPTAAAAILPGNGRRIVRALEVVELTGTFEATLPEYRSIYDVVQVGVDRPDLDTRIADRVELMWRAGFVDEVAALAEAGLRDGRTASRALGYAQVLAVLDGAMDSMDAAKQATTTATRRFARRQRSWFRRDPRISWLEFPDVAAALAEVRRLVGSL.

28–35 contacts ATP; it reads GPTGAGKS. 30–35 lines the substrate pocket; the sequence is TGAGKS. Residues 53-56 form an interaction with substrate tRNA region; sequence DSMQ.

Belongs to the IPP transferase family. As to quaternary structure, monomer. The cofactor is Mg(2+).

It carries out the reaction adenosine(37) in tRNA + dimethylallyl diphosphate = N(6)-dimethylallyladenosine(37) in tRNA + diphosphate. In terms of biological role, catalyzes the transfer of a dimethylallyl group onto the adenine at position 37 in tRNAs that read codons beginning with uridine, leading to the formation of N6-(dimethylallyl)adenosine (i(6)A). This chain is tRNA dimethylallyltransferase, found in Parafrankia sp. (strain EAN1pec).